A 946-amino-acid polypeptide reads, in one-letter code: Bifunctional glutamine synthetase adenylyltransferase/adenylyl-removing enzyme (946 aa).

An adenylyl removase region spans residues Met1–Glu440. The adenylyl transferase stretch occupies residues Ser449–Gly946.

The protein belongs to the GlnE family. Mg(2+) serves as cofactor.

It catalyses the reaction [glutamine synthetase]-O(4)-(5'-adenylyl)-L-tyrosine + phosphate = [glutamine synthetase]-L-tyrosine + ADP. The catalysed reaction is [glutamine synthetase]-L-tyrosine + ATP = [glutamine synthetase]-O(4)-(5'-adenylyl)-L-tyrosine + diphosphate. Involved in the regulation of glutamine synthetase GlnA, a key enzyme in the process to assimilate ammonia. When cellular nitrogen levels are high, the C-terminal adenylyl transferase (AT) inactivates GlnA by covalent transfer of an adenylyl group from ATP to specific tyrosine residue of GlnA, thus reducing its activity. Conversely, when nitrogen levels are low, the N-terminal adenylyl removase (AR) activates GlnA by removing the adenylyl group by phosphorolysis, increasing its activity. The regulatory region of GlnE binds the signal transduction protein PII (GlnB) which indicates the nitrogen status of the cell. The sequence is that of Bifunctional glutamine synthetase adenylyltransferase/adenylyl-removing enzyme from Citrobacter koseri (strain ATCC BAA-895 / CDC 4225-83 / SGSC4696).